We begin with the raw amino-acid sequence, 287 residues long: Ribosomal RNA small subunit methyltransferase I (287 aa).

The protein belongs to the methyltransferase superfamily. RsmI family.

Its subcellular location is the cytoplasm. It carries out the reaction cytidine(1402) in 16S rRNA + S-adenosyl-L-methionine = 2'-O-methylcytidine(1402) in 16S rRNA + S-adenosyl-L-homocysteine + H(+). Its function is as follows. Catalyzes the 2'-O-methylation of the ribose of cytidine 1402 (C1402) in 16S rRNA. This chain is Ribosomal RNA small subunit methyltransferase I, found in Streptococcus pyogenes serotype M1.